Consider the following 419-residue polypeptide: Probable serine/threonine-protein kinase DDB_G0290859 (419 aa).

Positions 40–387 constitute a Protein kinase domain; it reads YDIISTIGSG…ASTIKKHPFF (348 aa). ATP-binding positions include 46–54 and K69; that span reads IGSGSYGEV. D173 functions as the Proton acceptor in the catalytic mechanism. In terms of domain architecture, AGC-kinase C-terminal spans 388-419; the sequence is EGINWEEMANFNVEPPFKPTLSSDDDISYFTN.

Belongs to the protein kinase superfamily. AGC Ser/Thr protein kinase family.

It carries out the reaction L-seryl-[protein] + ATP = O-phospho-L-seryl-[protein] + ADP + H(+). The catalysed reaction is L-threonyl-[protein] + ATP = O-phospho-L-threonyl-[protein] + ADP + H(+). This chain is Probable serine/threonine-protein kinase DDB_G0290859, found in Dictyostelium discoideum (Social amoeba).